Here is a 509-residue protein sequence, read N- to C-terminus: Dihydrolipoyl dehydrogenase, mitochondrial (509 aa).

Residues 1–35 (MQSWSRVYCTLAKRGHFNRIAHGLQGVSAVPLRTY) constitute a mitochondrion transit peptide. Residue lysine 66 is modified to N6-acetyllysine; alternate. An N6-succinyllysine; alternate modification is found at lysine 66. Residues 71–80 (EKNETLGGTC) and lysine 89 contribute to the FAD site. Cysteine 80 and cysteine 85 are disulfide-bonded. N6-acetyllysine; alternate occurs at positions 104, 122, 132, and 143. Residues lysine 104, lysine 122, lysine 132, and lysine 143 each carry the N6-succinyllysine; alternate modification. Glycine 154 serves as a coordination point for FAD. 2 positions are modified to N6-succinyllysine: lysine 159 and lysine 166. 183–185 (TGS) provides a ligand contact to FAD. Residues 220-227 (GAGVIGVE) and glutamate 243 contribute to the NAD(+) site. 2 positions are modified to N6-succinyllysine: lysine 273 and lysine 277. Valine 278 is a binding site for NAD(+). Phosphoserine is present on residues serine 285 and serine 297. Position 314 (glycine 314) interacts with NAD(+). An N6-acetyllysine modification is found at lysine 346. Residues aspartate 355 and 361 to 364 (MLAH) contribute to the FAD site. An N6-acetyllysine; alternate modification is found at lysine 410. Position 410 is an N6-succinyllysine; alternate (lysine 410). Residues lysine 417 and lysine 420 each carry the N6-acetyllysine modification. Position 430 is an N6-succinyllysine (lysine 430). Histidine 487 (proton acceptor) is an active-site residue. A Phosphoserine modification is found at serine 502. Lysine 505 carries the post-translational modification N6-acetyllysine; alternate. Lysine 505 carries the N6-succinyllysine; alternate modification.

The protein belongs to the class-I pyridine nucleotide-disulfide oxidoreductase family. Homodimer. Part of the multimeric pyruvate dehydrogenase complex that contains multiple copies of pyruvate dehydrogenase (subunits PDHA (PDHA1 or PDHA2) and PDHB, E1), dihydrolipoamide acetyltransferase (DLAT, E2) and lipoamide dehydrogenase (DLD, E3). These subunits are bound to an inner core composed of about 48 DLAT and 12 PDHX molecules (by non covalent bonds). The 2-oxoglutarate dehydrogenase complex is composed of OGDH (2-oxoglutarate dehydrogenase; E1), DLST (dihydrolipoamide succinyltransferase; E2), DLD (dihydrolipoamide dehydrogenase; E3) and the assembly factor KGD4. It contains multiple copies of the three enzymatic components (E1, E2 and E3). In the nucleus, the 2-oxoglutarate dehydrogenase complex associates with KAT2A. Interacts with PDHX. FAD serves as cofactor. Post-translationally, tyrosine phosphorylated. In terms of tissue distribution, expressed in heart (at protein level).

It localises to the mitochondrion matrix. It is found in the nucleus. The protein localises to the cell projection. The protein resides in the cilium. Its subcellular location is the flagellum. It localises to the cytoplasmic vesicle. It is found in the secretory vesicle. The protein localises to the acrosome. The catalysed reaction is N(6)-[(R)-dihydrolipoyl]-L-lysyl-[protein] + NAD(+) = N(6)-[(R)-lipoyl]-L-lysyl-[protein] + NADH + H(+). Functionally, lipoamide dehydrogenase is a component of the glycine cleavage system as well as an E3 component of three alpha-ketoacid dehydrogenase complexes (pyruvate-, alpha-ketoglutarate-, and branched-chain amino acid-dehydrogenase complex). The 2-oxoglutarate dehydrogenase complex is mainly active in the mitochondrion. A fraction of the 2-oxoglutarate dehydrogenase complex also localizes in the nucleus and is required for lysine succinylation of histones: associates with KAT2A on chromatin and provides succinyl-CoA to histone succinyltransferase KAT2A. In monomeric form may have additional moonlighting function as serine protease. Involved in the hyperactivation of spermatazoa during capacitation and in the spermatazoal acrosome reaction. The chain is Dihydrolipoyl dehydrogenase, mitochondrial (DLD) from Sus scrofa (Pig).